The primary structure comprises 165 residues: uncharacterized protein (165 aa).

A helical membrane pass occupies residues 7–29; it reads YPLIFTAFLLIAFCLIFFSYHLI.

It is found in the membrane. This is an uncharacterized protein from Bacillus subtilis (strain 168).